The sequence spans 122 residues: Large ribosomal subunit protein uL14 (122 aa).

It belongs to the universal ribosomal protein uL14 family. In terms of assembly, part of the 50S ribosomal subunit. Forms a cluster with proteins L3 and L19. In the 70S ribosome, L14 and L19 interact and together make contacts with the 16S rRNA in bridges B5 and B8.

In terms of biological role, binds to 23S rRNA. Forms part of two intersubunit bridges in the 70S ribosome. The polypeptide is Large ribosomal subunit protein uL14 (Bifidobacterium longum (strain DJO10A)).